A 254-amino-acid polypeptide reads, in one-letter code: DNA repair protein RecO (254 aa).

This sequence belongs to the RecO family.

Involved in DNA repair and RecF pathway recombination. The protein is DNA repair protein RecO of Agrobacterium fabrum (strain C58 / ATCC 33970) (Agrobacterium tumefaciens (strain C58)).